The chain runs to 343 residues: Branched-chain-amino-acid aminotransferase (343 aa).

The residue at position 182 (K182) is an N6-(pyridoxal phosphate)lysine.

This sequence belongs to the class-IV pyridoxal-phosphate-dependent aminotransferase family. The cofactor is pyridoxal 5'-phosphate.

The catalysed reaction is L-leucine + 2-oxoglutarate = 4-methyl-2-oxopentanoate + L-glutamate. The enzyme catalyses L-isoleucine + 2-oxoglutarate = (S)-3-methyl-2-oxopentanoate + L-glutamate. It catalyses the reaction L-valine + 2-oxoglutarate = 3-methyl-2-oxobutanoate + L-glutamate. It functions in the pathway amino-acid biosynthesis; L-isoleucine biosynthesis; L-isoleucine from 2-oxobutanoate: step 4/4. It participates in amino-acid biosynthesis; L-leucine biosynthesis; L-leucine from 3-methyl-2-oxobutanoate: step 4/4. Its pathway is amino-acid biosynthesis; L-valine biosynthesis; L-valine from pyruvate: step 4/4. Acts on leucine, isoleucine and valine. This Haemophilus influenzae (strain ATCC 51907 / DSM 11121 / KW20 / Rd) protein is Branched-chain-amino-acid aminotransferase (ilvE).